Here is a 331-residue protein sequence, read N- to C-terminus: MRPLVLLWGCLVLPGYEALKGPKEISGFEGDTVSLRCTYVEKMKEHRKYWCRQGGILVSRCGDIVYANQDQEVTRGRMSIRDSPQELSMTVIMRDLTLKDSGKYWCGIDRLGRDESFEVTLIVFPGKRDNAVPAGTCCPSSPTPSFQPLTPTRSLQPKAKAWQTQLPEPRSSRPVVWLPLTTPQDSRAVASSVSKPSVSIPMVRMMAPVLILLSLLLAAGLIAFGSHMLRWRKKAWLATETQKNEKVYLETSLPGNGWTTEDSTIDLAVTPECLRNLNPSAVPSPETQNLSQSTEEEEAARSLDDDKEDVMAPPPLQMSAEELAFSEFISV.

The N-terminal stretch at 1-18 (MRPLVLLWGCLVLPGYEA) is a signal peptide. Positions 19–120 (LKGPKEISGF…LGRDESFEVT (102 aa)) constitute an Ig-like V-type domain. Residues 19 to 204 (LKGPKEISGF…KPSVSIPMVR (186 aa)) are Extracellular-facing. An intrachain disulfide couples C37 to C106. The O-linked (GalNAc...) threonine glycan is linked to T136. S140 carries an O-linked (GalNAc...) serine glycan. T143 carries O-linked (GalNAc...) threonine glycosylation. O-linked (GalNAc...) serine glycosylation occurs at S145. T150 and T152 each carry an O-linked (GalNAc...) threonine glycan. S154 carries an O-linked (GalNAc...) serine glycan. O-linked (GalNAc...) threonine glycans are attached at residues T164, T181, and T182. S186 is a glycosylation site (O-linked (GalNAc...) serine). The chain crosses the membrane as a helical span at residues 205-225 (MMAPVLILLSLLLAAGLIAFG). The Cytoplasmic segment spans residues 226-331 (SHMLRWRKKA…ELAFSEFISV (106 aa)). Over residues 278 to 293 (NPSAVPSPETQNLSQS) the composition is skewed to polar residues. The segment at 278-318 (NPSAVPSPETQNLSQSTEEEEAARSLDDDKEDVMAPPPLQM) is disordered.

The protein belongs to the CD300 family. O-glycosylated with sialylated oligosaccharides. In terms of tissue distribution, expressed in monocyte cell lines. Expressed in certain types of endothelial and myeloid lineage cells. Expressed in mesenteric lymph nodes (LNs), spleen, thymus, lung, heart and kidney. Expressed in high endothelial venules (HEVs) in peripheral and mesenteric LNs (at protein level). Highly expressed in heart. Slightly expressed in spleen and thymus. Isoform 5 is expressed preferentially in heart. Isoform 1 is expressed predominantly in kidney and liver.

It localises to the apical cell membrane. The protein localises to the basolateral cell membrane. It is found in the endosome. Its subcellular location is the multivesicular body membrane. Receptor which may mediate L-selectin-dependent lymphocyte rollings. Binds SELL in a calcium dependent manner. Binds lymphocyte. The chain is CMRF35-like molecule 9 (Cd300lg) from Mus musculus (Mouse).